We begin with the raw amino-acid sequence, 357 residues long: GTPase Obg (357 aa).

The Obg domain occupies 1–159; the sequence is MKFVDEAEIQ…RTLKLELKLL (159 aa). Residues 160–343 form the OBG-type G domain; sequence ADIGMLGFPN…IMKSAMTLFE (184 aa). GTP contacts are provided by residues 166-173, 191-195, 213-216, 293-296, and 324-326; these read GFPNVGKS, FTTLY, DVPG, NKAD, and SAV. The Mg(2+) site is built by serine 173 and threonine 193.

The protein belongs to the TRAFAC class OBG-HflX-like GTPase superfamily. OBG GTPase family. Monomer. Mg(2+) is required as a cofactor.

The protein localises to the cytoplasm. In terms of biological role, an essential GTPase which binds GTP, GDP and possibly (p)ppGpp with moderate affinity, with high nucleotide exchange rates and a fairly low GTP hydrolysis rate. Plays a role in control of the cell cycle, stress response, ribosome biogenesis and in those bacteria that undergo differentiation, in morphogenesis control. The protein is GTPase Obg of Xylella fastidiosa (strain M12).